A 595-amino-acid polypeptide reads, in one-letter code: Coiled-coil domain-containing protein 22 (595 aa).

Residues 1–321 (MEEADRILIH…VSDVPATSQR (321 aa)) form a sufficient for interaction with COMMD1 region. Positions 1–447 (MEEADRILIH…LQDCRELESS (447 aa)) are sufficicient and required for interaction with CCDC93. Residues 218 to 230 (TGRDRAGDEDWGH) show a composition bias toward basic and acidic residues. A disordered region spans residues 218–243 (TGRDRAGDEDWGHRTSRLPAQEDTRA). Positions 323 to 369 (EQDTWAAQEQELESLREQLEGVNHNIEEVEANMKTLGINLVQVETEC) form a coiled coil. S410 bears the Phosphoserine mark. 2 coiled-coil regions span residues 447 to 484 (SRRLAEIQELHQSVRAAAEEARRKEEVYKQLVSELETL) and 564 to 595 (GKKTLSNLDKIREDYRALRQENAGLLGRVREA).

It belongs to the CCDC22 family. As to quaternary structure, component of the commander complex consisting of the CCC subcomplex and the retriever subcomplex. Component of the CCC (COMMD/CCDC22/CCDC93) subcomplex consisting of COMMD1, COMMD2, COMMD3, COMMD4, COMMD5, COMMD6, COMMD7, COMMD8, COMMD9, COMMD10, CCDC22 and CCDC93. Forms a coiled-coil heterodimer with CCDC22; this heterodimer interacts with the guanine nucleotide exchange factor DENND10; the interaction is direct. Interacts with CUL1, CUL2, CUL3, SKP1, BTRC. Interacts with SNX17 and SNX31. Interacts with CPNE1 and CPNE4.

It localises to the endosome. The protein localises to the cytoplasm. Its subcellular location is the cytoskeleton. The protein resides in the microtubule organizing center. It is found in the centrosome. Its function is as follows. Component of the commander complex that is essential for endosomal recycling of transmembrane cargos; the Commander complex is composed of composed of the CCC subcomplex and the retriever subcomplex. Component of the CCC complex, which is involved in the regulation of endosomal recycling of surface proteins, including integrins, signaling receptor and channels. Involved in regulation of NF-kappa-B signaling. Promotes ubiquitination of I-kappa-B-kinase subunit IKBKB and its subsequent proteasomal degradation leading to NF-kappa-B activation; the function may involve association with COMMD8 and a CUL1-dependent E3 ubiquitin ligase complex. May down-regulate NF-kappa-B activity via association with COMMD1 and involving a CUL2-dependent E3 ubiquitin ligase complex. Regulates the cellular localization of COMM domain-containing proteins, such as COMMD1 and COMMD10. Component of the CCC complex, which is involved in the regulation of endosomal recycling of surface proteins, including integrins, signaling receptor and channels. The CCC complex associates with SNX17, retriever and WASH complexes to prevent lysosomal degradation and promote cell surface recycling of numerous cargos such as integrins ITGA5:ITGB1. Plays a role in copper ion homeostasis. Involved in copper-dependent ATP7A trafficking between the trans-Golgi network and vesicles in the cell periphery; the function is proposed to depend on its association within the CCC complex and cooperation with the WASH complex on early endosomes. This chain is Coiled-coil domain-containing protein 22 (CCDC22), found in Bos taurus (Bovine).